We begin with the raw amino-acid sequence, 98 residues long: NADH-ubiquinone oxidoreductase chain 4L (98 aa).

A run of 3 helical transmembrane segments spans residues 1–21 (MSMMYFNIFMAFTVSLVGLLM), 29–49 (SLLCLEGMMLSLFVMMSVTIL), and 61–81 (IILLVFAACEAALGLSLLVMV).

It belongs to the complex I subunit 4L family. In terms of assembly, core subunit of respiratory chain NADH dehydrogenase (Complex I) which is composed of 45 different subunits.

Its subcellular location is the mitochondrion inner membrane. It catalyses the reaction a ubiquinone + NADH + 5 H(+)(in) = a ubiquinol + NAD(+) + 4 H(+)(out). Core subunit of the mitochondrial membrane respiratory chain NADH dehydrogenase (Complex I) which catalyzes electron transfer from NADH through the respiratory chain, using ubiquinone as an electron acceptor. Part of the enzyme membrane arm which is embedded in the lipid bilayer and involved in proton translocation. In Zalophus californianus (California sealion), this protein is NADH-ubiquinone oxidoreductase chain 4L (MT-ND4L).